The primary structure comprises 88 residues: MLKASILFITISLTLMLENSYGKSCRSIGEKCSKTVFDRCCGDSICHLTSPFHGKCVKCLKEGQLCTSDKNCCSDKCNWGKCTKEKHY.

The signal sequence occupies residues 1–22 (MLKASILFITISLTLMLENSYG). 3 disulfides stabilise this stretch: Cys-59–Cys-73, Cys-66–Cys-77, and Cys-72–Cys-82.

It is found in the secreted. This is an uncharacterized protein from Schistosoma japonicum (Blood fluke).